We begin with the raw amino-acid sequence, 123 residues long: Large ribosomal subunit protein uL14 (123 aa).

The protein belongs to the universal ribosomal protein uL14 family. In terms of assembly, part of the 50S ribosomal subunit. Forms a cluster with proteins L3 and L19. In the 70S ribosome, L14 and L19 interact and together make contacts with the 16S rRNA in bridges B5 and B8.

In terms of biological role, binds to 23S rRNA. Forms part of two intersubunit bridges in the 70S ribosome. The protein is Large ribosomal subunit protein uL14 of Chromohalobacter salexigens (strain ATCC BAA-138 / DSM 3043 / CIP 106854 / NCIMB 13768 / 1H11).